A 603-amino-acid chain; its full sequence is Elongation factor 4 (603 aa).

One can recognise a tr-type G domain in the interval 2–184; the sequence is NHIRNFSIIA…AVVARMPPPR (183 aa). Residues 14–19 and 131–134 each bind GTP; these read DHGKST and NKMD.

The protein belongs to the TRAFAC class translation factor GTPase superfamily. Classic translation factor GTPase family. LepA subfamily.

The protein localises to the cell inner membrane. It carries out the reaction GTP + H2O = GDP + phosphate + H(+). Its function is as follows. Required for accurate and efficient protein synthesis under certain stress conditions. May act as a fidelity factor of the translation reaction, by catalyzing a one-codon backward translocation of tRNAs on improperly translocated ribosomes. Back-translocation proceeds from a post-translocation (POST) complex to a pre-translocation (PRE) complex, thus giving elongation factor G a second chance to translocate the tRNAs correctly. Binds to ribosomes in a GTP-dependent manner. In Albidiferax ferrireducens (strain ATCC BAA-621 / DSM 15236 / T118) (Rhodoferax ferrireducens), this protein is Elongation factor 4.